We begin with the raw amino-acid sequence, 237 residues long: dTDP-3-amino-3,4,6-trideoxy-alpha-D-glucopyranose N,N-dimethyltransferase (237 aa).

Residues Y14 and R17 each coordinate substrate. S-adenosyl-L-methionine contacts are provided by residues Y21, A46, E67, 89-90 (DM), and M105. Substrate contacts are provided by residues 145-147 (TFA), S152, 165-169 (RVSHS), and R229.

This sequence belongs to the methyltransferase TylM1/DesVI family. In terms of assembly, homodimer.

The catalysed reaction is dTDP-3-amino-3,4,6-trideoxy-alpha-D-glucose + 2 S-adenosyl-L-methionine = dTDP-alpha-D-desosamine + 2 S-adenosyl-L-homocysteine + 2 H(+). Its pathway is antibiotic biosynthesis. In terms of biological role, S-adenosyl-L-methionine-dependent methyltransferase involved in the biosynthesis of desosamine, found in certain macrolide antibiotics such as erthyromycin, azithromycin, clarithromycin, and methymycin. Catalyzes the last step in the biosynthesis of dTDP-desosamine, i.e. the N,N-dimethylation of the 3-amino group of dTDP-3-amino-3,4,6-trideoxy-alpha-D-glucose. This Streptomyces venezuelae protein is dTDP-3-amino-3,4,6-trideoxy-alpha-D-glucopyranose N,N-dimethyltransferase.